A 552-amino-acid polypeptide reads, in one-letter code: Hydroxylamine reductase (552 aa).

[2Fe-2S] cluster-binding residues include Cys-3, Cys-6, Cys-18, and Cys-25. Hybrid [4Fe-2O-2S] cluster is bound by residues His-250, Glu-274, Cys-318, Cys-406, Cys-434, Cys-459, Glu-493, and Lys-495. The residue at position 406 (Cys-406) is a Cysteine persulfide.

It belongs to the HCP family. [2Fe-2S] cluster is required as a cofactor. It depends on hybrid [4Fe-2O-2S] cluster as a cofactor.

It localises to the cytoplasm. The enzyme catalyses A + NH4(+) + H2O = hydroxylamine + AH2 + H(+). Catalyzes the reduction of hydroxylamine to form NH(3) and H(2)O. The protein is Hydroxylamine reductase of Shewanella sediminis (strain HAW-EB3).